Reading from the N-terminus, the 812-residue chain is Toll-like receptor 10 (812 aa).

The first 19 residues, 1–19, serve as a signal peptide directing secretion; sequence MRYIRSIYIFCSIVTSVRS. Residues 20–577 lie on the Extracellular side of the membrane; sequence GASELPEERE…VHLPEISCNT (558 aa). LRR repeat units lie at residues 24–46, 49–70, 73–94, 97–118, and 119–139; these read LPEE…PEGL, ITTT…DFRS, KLKV…TFEF, ELSY…SLAG, and LRHL…VETG. The N-linked (GlcNAc...) asparagine glycan is linked to asparagine 33. An N-linked (GlcNAc...) asparagine glycan is attached at asparagine 140. One copy of the LRR 6 repeat lies at 143 to 166; sequence HLETLGLSGAKIQKSDFQKIAHLQ. An N-linked (GlcNAc...) asparagine glycan is attached at asparagine 189. 4 LRR repeats span residues 296–321, 325–348, 350–373, and 374–395; these read SNTV…ESIY, TKMD…PMYP, RFQY…IQLP, and HLKT…SHFA. Asparagine 331 carries an N-linked (GlcNAc...) asparagine glycan. An N-linked (GlcNAc...) asparagine glycan is attached at asparagine 397. 5 LRR repeats span residues 399–420, 423–443, 445–467, 468–489, and 490–510; these read SLRH…NCLW, TLVT…GCLP, NIQI…THLT, SLRE…SHFR, and RLLV…DFFQ. N-linked (GlcNAc...) asparagine glycosylation is present at asparagine 428. The region spanning 523-577 is the LRRCT domain; it reads NPFRCTCELRDFIQLGKYSEGMMVGWSDSYICEYPLNLKGTQLKDVHLPEISCNT. The helical transmembrane segment at 578–598 threads the bilayer; it reads GLLIVTIVVVMLVLGMAVAFC. At 599–812 the chain is on the cytoplasmic side; that stretch reads CLHFDLPWYL…AISLIRTDCL (214 aa). Residues 633–776 enclose the TIR domain; the sequence is VQFHVFISYS…LFWANLRAAL (144 aa).

The protein belongs to the Toll-like receptor family. Binds MYD88 via their respective TIR domains.

It is found in the membrane. Participates in the innate immune response to microbial agents. Acts via MYD88 and TRAF6, leading to NF-kappa-B activation, cytokine secretion and the inflammatory response. This chain is Toll-like receptor 10 (TLR10), found in Bos taurus (Bovine).